Here is a 901-residue protein sequence, read N- to C-terminus: Aconitate hydratase A (901 aa).

The [4Fe-4S] cluster site is built by Cys443, Cys509, and Cys512.

Belongs to the aconitase/IPM isomerase family. Monomer. It depends on [4Fe-4S] cluster as a cofactor.

The catalysed reaction is citrate = D-threo-isocitrate. It carries out the reaction (2S,3R)-3-hydroxybutane-1,2,3-tricarboxylate = 2-methyl-cis-aconitate + H2O. Its pathway is carbohydrate metabolism; tricarboxylic acid cycle; isocitrate from oxaloacetate: step 2/2. It participates in organic acid metabolism; propanoate degradation. Involved in the catabolism of short chain fatty acids (SCFA) via the tricarboxylic acid (TCA)(acetyl degradation route) and probably the 2-methylcitrate cycle I (propionate degradation route). Catalyzes the reversible isomerization of citrate to isocitrate via cis-aconitate. Could catalyze the hydration of 2-methyl-cis-aconitate to yield (2R,3S)-2-methylisocitrate. The apo form of AcnA functions as a RNA-binding regulatory protein. This is Aconitate hydratase A (acnA) from Staphylococcus aureus (strain COL).